The primary structure comprises 355 residues: Blue-sensitive opsin (355 aa).

Residues 1-36 (MNGTEGINFYVPLSNKTGLVRSPFEYPQYYLAEPWK) lie on the Extracellular side of the membrane. Asn2 and Asn15 each carry an N-linked (GlcNAc...) asparagine glycan. The chain crosses the membrane as a helical span at residues 37–61 (YKVVCCYIFFLIFTGLPINILTLLV). The Cytoplasmic portion of the chain corresponds to 62–73 (TFKHKKLRQPLN). A helical membrane pass occupies residues 74–98 (YILVNLAVADLFMACFGFTVTFYTA). Topologically, residues 99–113 (WNGYFIFGPIGCAIE) are extracellular. Cys110 and Cys187 are oxidised to a cystine. Residues 114-133 (GFFATLGGQVALWSLVVLAI) traverse the membrane as a helical segment. Over 134-152 (ERYIVVCKPMGNFRFSATH) the chain is Cytoplasmic. A helical transmembrane segment spans residues 153-176 (ALMGISFTWFMSFSCAAPPLLGWS). Residues 177-202 (RYIPEGMQCSCGPDYYTLNPDYHNES) are Extracellular-facing. Asn200 carries an N-linked (GlcNAc...) asparagine glycan. A helical membrane pass occupies residues 203-230 (YVLYMFGVHFVIPVVVIFFSYGRLICKV). Topologically, residues 231–252 (REAAAQQQESASTQKAEREVTR) are cytoplasmic. A helical transmembrane segment spans residues 253 to 276 (MVILMVLGFLLAWTPYAMVAFWIF). Residues 277–284 (TNKGVDFS) lie on the Extracellular side of the membrane. The helical transmembrane segment at 285–309 (ATLMSVPAFFSKSSSLYNPIIYVLM) threads the bilayer. An N6-(retinylidene)lysine modification is found at Lys296. The Cytoplasmic segment spans residues 310–355 (NKQFRNCMITTICCGKNPFGDEDVSSSVSQSKTEVSSVSSSQVSPA). 2 S-palmitoyl cysteine lipidation sites follow: Cys322 and Cys323. A disordered region spans residues 332–355 (DVSSSVSQSKTEVSSVSSSQVSPA). The segment covering 334–355 (SSSVSQSKTEVSSVSSSQVSPA) has biased composition (low complexity).

The protein belongs to the G-protein coupled receptor 1 family. Opsin subfamily. In terms of processing, phosphorylated on some or all of the serine and threonine residues present in the C-terminal region.

It is found in the membrane. Functionally, visual pigments are the light-absorbing molecules that mediate vision. They consist of an apoprotein, opsin, covalently linked to cis-retinal. This opsin uses a vitamin A2 chromophore. This Anolis carolinensis (Green anole) protein is Blue-sensitive opsin.